Here is a 399-residue protein sequence, read N- to C-terminus: Nicotinate phosphoribosyltransferase (399 aa).

H224 is subject to Phosphohistidine; by autocatalysis.

Belongs to the NAPRTase family. Post-translationally, transiently phosphorylated on a His residue during the reaction cycle. Phosphorylation strongly increases the affinity for substrates and increases the rate of nicotinate D-ribonucleotide production. Dephosphorylation regenerates the low-affinity form of the enzyme, leading to product release.

The catalysed reaction is nicotinate + 5-phospho-alpha-D-ribose 1-diphosphate + ATP + H2O = nicotinate beta-D-ribonucleotide + ADP + phosphate + diphosphate. It functions in the pathway cofactor biosynthesis; NAD(+) biosynthesis; nicotinate D-ribonucleotide from nicotinate: step 1/1. In terms of biological role, catalyzes the synthesis of beta-nicotinate D-ribonucleotide from nicotinate and 5-phospho-D-ribose 1-phosphate at the expense of ATP. This Ectopseudomonas mendocina (strain ymp) (Pseudomonas mendocina) protein is Nicotinate phosphoribosyltransferase.